A 120-amino-acid chain; its full sequence is Movement protein TGB2 (120 aa).

Residues 1–16 (MSSTSEPTYQLAPPDS) lie on the Cytoplasmic side of the membrane. Residues 17–37 (LKQVYLTLAAGFAVGLGIFLL) traverse the membrane as a helical segment. Residues 38 to 76 (RTNTLPHTGDNIHHLPHGGCYRDGTKSIRYNSPGVATSS) lie on the Lumenal side of the membrane. A helical membrane pass occupies residues 77–97 (NIFLPAVAVLCILALLHVPFF). Topologically, residues 98-120 (QPDRVRRRCCRFYWCADPHHPTV) are cytoplasmic.

This sequence belongs to the Tymovirales TGBp2 protein family.

The protein resides in the host endoplasmic reticulum membrane. Its function is as follows. Plays a role in viral cell-to-cell propagation, by facilitating genome transport to neighboring plant cells through plasmosdesmata,. The sequence is that of Movement protein TGB2 (ORF3) from Lolium latent virus (isolate Lolium/USA/US1/-) (LoLV).